The sequence spans 115 residues: Meiotically up-regulated gene 106 protein (115 aa).

The first 34 residues, 1 to 34 (MSIKVEWIKFTRLKKCATLLVQLSLLRYRYMVLA), serve as a signal peptide directing secretion. The next 2 helical transmembrane spans lie at 41 to 60 (CIVVTIYCGCLFWFSNGALF) and 81 to 103 (GVKLKIFLFTILLAFETNTFTPY).

It is found in the membrane. Has a role in meiosis. The protein is Meiotically up-regulated gene 106 protein (mug106) of Schizosaccharomyces pombe (strain 972 / ATCC 24843) (Fission yeast).